A 324-amino-acid polypeptide reads, in one-letter code: Putative 12-oxophytodienoate reductase-like protein 1 (324 aa).

The residue at position 1 (methionine 1) is an N-acetylmethionine. FMN contacts are provided by residues 14–16 (PMA), alanine 47, and glutamine 89. A compositionally biased stretch (polar residues) spans 99–113 (QDCQPNGESPVSSTD). A disordered region spans residues 99–128 (QDCQPNGESPVSSTDKPFADDPSNEFTPPR). 160-163 (HGAH) contributes to the substrate binding site. Tyrosine 165 serves as the catalytic Proton donor. Arginine 212 is a binding site for FMN. Arginine 252 serves as a coordination point for substrate. FMN contacts are provided by residues glycine 282 and 303 to 304 (GR).

It belongs to the NADH:flavin oxidoreductase/NADH oxidase family. It depends on FMN as a cofactor.

Its function is as follows. Putative oxophytodienoate reductase that may be involved in the biosynthesis or metabolism of oxylipin signaling molecules. This chain is Putative 12-oxophytodienoate reductase-like protein 1, found in Arabidopsis thaliana (Mouse-ear cress).